We begin with the raw amino-acid sequence, 1070 residues long: DNA-directed RNA polymerase subunit beta (1070 aa).

It belongs to the RNA polymerase beta chain family. In plastids the minimal PEP RNA polymerase catalytic core is composed of four subunits: alpha, beta, beta', and beta''. When a (nuclear-encoded) sigma factor is associated with the core the holoenzyme is formed, which can initiate transcription.

The protein resides in the plastid. It localises to the chloroplast. The enzyme catalyses RNA(n) + a ribonucleoside 5'-triphosphate = RNA(n+1) + diphosphate. In terms of biological role, DNA-dependent RNA polymerase catalyzes the transcription of DNA into RNA using the four ribonucleoside triphosphates as substrates. The polypeptide is DNA-directed RNA polymerase subunit beta (Populus trichocarpa (Western balsam poplar)).